Consider the following 406-residue polypeptide: Immediate early response gene 5-like protein (406 aa).

Disordered regions lie at residues 166-195 (QPPH…APAA) and 216-235 (AAPS…PSSS). Pro residues predominate over residues 182–193 (QPGPAPLPPPAP).

The protein belongs to the IER family.

The chain is Immediate early response gene 5-like protein (Ier5l) from Mus musculus (Mouse).